A 296-amino-acid chain; its full sequence is 4-hydroxybenzoate octaprenyltransferase (296 aa).

8 helical membrane passes run 29–49 (IGIYLLLWPTLWSLWIAADGV), 55–75 (LLIFVLGVILMRAAGCVINDF), 102–122 (AWITFAVLVALSFGLVLLTNA), 146–166 (YYPQVVLGAAYSWGILMAFTA), 169–189 (GELPASAWLLFLANVLWTVAY), 219–239 (LIIGSLQGLTLLLLVLAGNRF), 241–261 (LGLCFYLGLAVAAACFVWEAW), and 275–295 (FLHNHWAGLAIFLGTVADYAL).

This sequence belongs to the UbiA prenyltransferase family. Mg(2+) is required as a cofactor.

It localises to the cell inner membrane. The catalysed reaction is all-trans-octaprenyl diphosphate + 4-hydroxybenzoate = 4-hydroxy-3-(all-trans-octaprenyl)benzoate + diphosphate. It participates in cofactor biosynthesis; ubiquinone biosynthesis. In terms of biological role, catalyzes the prenylation of para-hydroxybenzoate (PHB) with an all-trans polyprenyl group. Mediates the second step in the final reaction sequence of ubiquinone-8 (UQ-8) biosynthesis, which is the condensation of the polyisoprenoid side chain with PHB, generating the first membrane-bound Q intermediate 3-octaprenyl-4-hydroxybenzoate. The chain is 4-hydroxybenzoate octaprenyltransferase from Pseudomonas aeruginosa (strain LESB58).